Here is a 290-residue protein sequence, read N- to C-terminus: Protease HtpX (290 aa).

2 helical membrane-spanning segments follow: residues 12–32 (IAVM…GLLA) and 42–62 (ALLV…LLIS). His147 lines the Zn(2+) pocket. Residue Glu148 is part of the active site. A Zn(2+)-binding site is contributed by His151. The next 2 helical transmembrane spans lie at 162–182 (LIQG…GHVV) and 197–217 (FWIV…MIVM). Residue Glu224 participates in Zn(2+) binding.

The protein belongs to the peptidase M48B family. The cofactor is Zn(2+).

Its subcellular location is the cell inner membrane. This is Protease HtpX from Pseudoalteromonas atlantica (strain T6c / ATCC BAA-1087).